The chain runs to 395 residues: Elongation factor Tu (395 aa).

The tr-type G domain maps to 10–205 (KPHCNIGTIG…AVDSYIPQPE (196 aa)). The tract at residues 19 to 26 (GHVDHGKT) is G1. 19 to 26 (GHVDHGKT) contacts GTP. A Mg(2+)-binding site is contributed by threonine 26. The interval 60-64 (GITIA) is G2. The tract at residues 81-84 (DCPG) is G3. GTP contacts are provided by residues 81-85 (DCPGH) and 136-139 (NKMD). The interval 136–139 (NKMD) is G4. The interval 173–175 (SAL) is G5.

Belongs to the TRAFAC class translation factor GTPase superfamily. Classic translation factor GTPase family. EF-Tu/EF-1A subfamily. Monomer.

It localises to the cytoplasm. It carries out the reaction GTP + H2O = GDP + phosphate + H(+). Its function is as follows. GTP hydrolase that promotes the GTP-dependent binding of aminoacyl-tRNA to the A-site of ribosomes during protein biosynthesis. This chain is Elongation factor Tu, found in Acidiphilium cryptum (strain JF-5).